Consider the following 102-residue polypeptide: Putative defensin-like protein 152 (102 aa).

The N-terminal stretch at 1–29 is a signal peptide; sequence MKKASQLSTTILTIFIVLAIGMMVKGTVG. 4 disulfides stabilise this stretch: Cys-34/Cys-93, Cys-51/Cys-71, Cys-56/Cys-87, and Cys-60/Cys-89.

This sequence belongs to the DEFL family.

The protein localises to the secreted. This Arabidopsis thaliana (Mouse-ear cress) protein is Putative defensin-like protein 152 (LCR11).